Consider the following 354-residue polypeptide: Carbamoyl phosphate synthase small chain (354 aa).

The segment at 1–167 is CPSase; that stretch reads MEAVLILEDG…KEPKIHKTAN (167 aa). L-glutamine contacts are provided by serine 45, glycine 219, and glycine 221. The Glutamine amidotransferase type-1 domain maps to 171 to 354; it reads RCVLIDCGVK…DEMIKLKDRK (184 aa). Cysteine 246 functions as the Nucleophile in the catalytic mechanism. Residues leucine 247, glutamine 250, asparagine 288, glycine 290, and phenylalanine 291 each contribute to the L-glutamine site. Residues histidine 330 and glutamate 332 contribute to the active site.

The protein belongs to the CarA family. As to quaternary structure, composed of two chains; the small (or glutamine) chain promotes the hydrolysis of glutamine to ammonia, which is used by the large (or ammonia) chain to synthesize carbamoyl phosphate. Tetramer of heterodimers (alpha,beta)4.

The catalysed reaction is hydrogencarbonate + L-glutamine + 2 ATP + H2O = carbamoyl phosphate + L-glutamate + 2 ADP + phosphate + 2 H(+). It catalyses the reaction L-glutamine + H2O = L-glutamate + NH4(+). It participates in amino-acid biosynthesis; L-arginine biosynthesis; carbamoyl phosphate from bicarbonate: step 1/1. It functions in the pathway pyrimidine metabolism; UMP biosynthesis via de novo pathway; (S)-dihydroorotate from bicarbonate: step 1/3. Small subunit of the glutamine-dependent carbamoyl phosphate synthetase (CPSase). CPSase catalyzes the formation of carbamoyl phosphate from the ammonia moiety of glutamine, carbonate, and phosphate donated by ATP, constituting the first step of 2 biosynthetic pathways, one leading to arginine and/or urea and the other to pyrimidine nucleotides. The small subunit (glutamine amidotransferase) binds and cleaves glutamine to supply the large subunit with the substrate ammonia. In Methanocaldococcus jannaschii (strain ATCC 43067 / DSM 2661 / JAL-1 / JCM 10045 / NBRC 100440) (Methanococcus jannaschii), this protein is Carbamoyl phosphate synthase small chain.